The following is a 204-amino-acid chain: MDAIVKNFPVLDDTGRPTQKEAEEAVRVLLRWAGEDPAREGLKDTPSRVAKAYREIFGGYDLVAEDVLGRTFEEVSGYDDIVLEKDIPFYSHCEHHMVPIIGKAHIAYLPNGRVLGLSKIARVVDIYARRLQTQEAMTAQIAKAIDETLMPRGVAVMIEAEHLCMAMRGIKKQGATTLTTTFTGAFKSEPAEQVRFMTMLRGFK.

Residues Cys-93, His-96, and Cys-164 each coordinate Zn(2+).

The protein belongs to the GTP cyclohydrolase I family. In terms of assembly, toroid-shaped homodecamer, composed of two pentamers of five dimers.

The enzyme catalyses GTP + H2O = 7,8-dihydroneopterin 3'-triphosphate + formate + H(+). It functions in the pathway cofactor biosynthesis; 7,8-dihydroneopterin triphosphate biosynthesis; 7,8-dihydroneopterin triphosphate from GTP: step 1/1. The polypeptide is GTP cyclohydrolase 1 (Rhizobium meliloti (strain 1021) (Ensifer meliloti)).